A 512-amino-acid chain; its full sequence is ATP synthase subunit alpha, chloroplastic (512 aa).

Position 170-177 (170-177 (GDRQTGKT)) interacts with ATP.

The protein belongs to the ATPase alpha/beta chains family. F-type ATPases have 2 components, CF(1) - the catalytic core - and CF(0) - the membrane proton channel. CF(1) has five subunits: alpha(3), beta(3), gamma(1), delta(1), epsilon(1). CF(0) has four main subunits: a, b, b' and c.

Its subcellular location is the plastid. The protein localises to the chloroplast thylakoid membrane. The catalysed reaction is ATP + H2O + 4 H(+)(in) = ADP + phosphate + 5 H(+)(out). Produces ATP from ADP in the presence of a proton gradient across the membrane. The alpha chain is a regulatory subunit. The protein is ATP synthase subunit alpha, chloroplastic of Staurastrum punctulatum (Green alga).